We begin with the raw amino-acid sequence, 236 residues long: MEKRDELYRGKAKSVFKTDDADRLILLFRNDTSAFDGKRIEQLDRKGMVNNKFNAFIMQKLEEAGVPTQFDKLLGDNECLVKKLDMIPVECVVRNYAAGSLVKRLGVEEGIKLEPSTFELFLKNDEKGDPFINESHVVAFGWGTAEQLVEMKKLSLKVNEVLSKLFDDAGLLLVDFKLEFGVFHGQIVLGDEFSPDGCRLWDKETRKKMDKDRFRQGLGDVIEAYEEVAKRLGVPL.

Belongs to the SAICAR synthetase family.

It catalyses the reaction 5-amino-1-(5-phospho-D-ribosyl)imidazole-4-carboxylate + L-aspartate + ATP = (2S)-2-[5-amino-1-(5-phospho-beta-D-ribosyl)imidazole-4-carboxamido]succinate + ADP + phosphate + 2 H(+). It participates in purine metabolism; IMP biosynthesis via de novo pathway; 5-amino-1-(5-phospho-D-ribosyl)imidazole-4-carboxamide from 5-amino-1-(5-phospho-D-ribosyl)imidazole-4-carboxylate: step 1/2. This Pseudomonas putida (strain GB-1) protein is Phosphoribosylaminoimidazole-succinocarboxamide synthase.